A 354-amino-acid polypeptide reads, in one-letter code: NADPH dehydrogenase (354 aa).

FMN is bound by residues Ser23, Pro24, Cys26, Ala58, and Gln100. Tyr182 (proton donor) is an active-site residue. FMN contacts are provided by Arg230, Leu301, Gly323, and Arg324.

It belongs to the NADH:flavin oxidoreductase/NADH oxidase family. NamA subfamily. As to quaternary structure, homodimer. Behaves as an active monomer in solution while in the crystal packing assembles following the classical dimeric architecture of other thermophilic-like ene-reductases. The cofactor is FMN.

It carries out the reaction A + NADPH + H(+) = AH2 + NADP(+). Its function is as follows. Ene-reductase that catalyzes the stereoselective reduction of activated C-C double bonds. Shows very good activity with 4-ketoisophorone, 2-cyclohexen-1-one and 1-octen-3-one, and low activity with maleimide, 2-methyl-pentenal, 2-methyl-cyclohexen-1-one, 2-cyclopenten-1-one and trans-2-hexen-1-al. Shows the highest catalytic efficiency with ketoisophorone. Exhibits a restricted substrate spectrum with generally lower activities compared to other ene-reductases. In Chloroflexus aggregans (strain MD-66 / DSM 9485), this protein is NADPH dehydrogenase.